The primary structure comprises 93 residues: Small ribosomal subunit protein bS20 (93 aa).

Residues M1 to N18 show a composition bias toward basic and acidic residues. A disordered region spans residues M1 to K25.

It belongs to the bacterial ribosomal protein bS20 family.

Binds directly to 16S ribosomal RNA. This is Small ribosomal subunit protein bS20 from Chlorobium chlorochromatii (strain CaD3).